The following is a 397-amino-acid chain: Probable pyruvate dehydrogenase E1 component subunit alpha, mitochondrial (397 aa).

Residues histidine 86, tyrosine 112, arginine 113, glycine 159, valine 161, aspartate 190, glycine 191, alanine 192, and asparagine 219 each contribute to the pyruvate site. Residues tyrosine 112, arginine 113, glycine 159, valine 161, aspartate 190, glycine 191, alanine 192, asparagine 219, and histidine 286 each coordinate thiamine diphosphate. Aspartate 190 contributes to the Mg(2+) binding site. Asparagine 219 is a binding site for Mg(2+).

As to quaternary structure, tetramer of 2 alpha and 2 beta subunits. Thiamine diphosphate serves as cofactor. The cofactor is Mg(2+).

The protein localises to the mitochondrion matrix. It catalyses the reaction N(6)-[(R)-lipoyl]-L-lysyl-[protein] + pyruvate + H(+) = N(6)-[(R)-S(8)-acetyldihydrolipoyl]-L-lysyl-[protein] + CO2. With respect to regulation, E1 activity is regulated by phosphorylation (inactivation) and dephosphorylation (activation) of the alpha subunit. Its function is as follows. The pyruvate dehydrogenase complex catalyzes the overall conversion of pyruvate to acetyl-CoA and CO(2). It contains multiple copies of three enzymatic components: pyruvate dehydrogenase (E1), dihydrolipoamide acetyltransferase (E2) and lipoamide dehydrogenase (E3). In Caenorhabditis elegans, this protein is Probable pyruvate dehydrogenase E1 component subunit alpha, mitochondrial.